The following is a 242-amino-acid chain: ATP synthase subunit a, chloroplastic (242 aa).

The next 5 helical transmembrane spans lie at 34-54, 93-113, 132-152, 188-210, and 222-242; these read GQVLVVVWFVLALLLLFAVLG, VPFIGTLFLFIFGCNWAGAII, INTTVALALLTSLAYFYAGLS, LFGNVLADELTITVLTSLVPLVI, and GSVQALIFSTLAAAYIAEALE.

The protein belongs to the ATPase A chain family. As to quaternary structure, F-type ATPases have 2 components, CF(1) - the catalytic core - and CF(0) - the membrane proton channel. CF(1) has five subunits: alpha(3), beta(3), gamma(1), delta(1), epsilon(1). CF(0) has four main subunits: a, b, b' and c.

Its subcellular location is the plastid. The protein localises to the chloroplast thylakoid membrane. Its function is as follows. Key component of the proton channel; it plays a direct role in the translocation of protons across the membrane. This is ATP synthase subunit a, chloroplastic from Trieres chinensis (Marine centric diatom).